A 429-amino-acid polypeptide reads, in one-letter code: Probable alcohol acetyltransferase orf1 (429 aa).

This sequence belongs to the alcohol acetyltransferase FCK4 family.

The protein operates within secondary metabolite biosynthesis. Its function is as follows. Probable alcohol acetyltransferase; part of the gene cluster that mediates the biosynthesis of the glycolipid biosurfactant ustilagic acid (UA). UA is a secreted cellobiose glycolipid that is toxic for many microorganisms and confers biocontrol activity to U.maydis. UA consists of 15,16-dihydroxypalmitic or 2,15,16-trihydroxypalmitic acid, which is O-glycosidically linked to cellobiose at its terminal hydroxyl group. In addition, the cellobiose moiety is acetylated and acylated with a short-chain hydroxy fatty acid. UA biosynthesis starts with omega-hydroxylation of palmitic acid catalyzed by the cytochrome P450 monooxygenase cyp1. Terminal hydroxylation of palmitic acid precedes subterminal hydroxylation catalyzed by the cytochrome P450 monooxygenase cyp2. Sequential glucosylation of the hydroxy fatty acid is probably catalyzed by the glycosyltransferase ugt1. The cellobiose lipid is further decorated by acetylation of the proximal glucose residue and by acylation with a short-chain beta-hydroxy fatty acid at the distal glucose residue. The acyltransferase uat1 may be a good candidate for catalyzing either acetylation or acylation of the cellobiose lipid. The fatty acid synthase fas2 may be involved in synthesis of the carbon backbone of the short-chain beta-hydroxy fatty acid esterified to the cellobiose disaccharide. The secreted UA consists of a mixture of both alpha-hydroxylated and non-hydroxylated glycolipids; therefore, alpha-hydroxylation of the long-chain fatty, catalyzed by the fatty acid hydroxylase ahd1, occurs late in UA biosynthesis and may be the last step before secretion. This chain is Probable alcohol acetyltransferase orf1, found in Mycosarcoma maydis (Corn smut fungus).